The primary structure comprises 389 residues: Chalcone synthase 1 (389 aa).

Residue Cys-164 is part of the active site.

Belongs to the thiolase-like superfamily. Chalcone/stilbene synthases family.

It carries out the reaction (E)-4-coumaroyl-CoA + 3 malonyl-CoA + 3 H(+) = 2',4,4',6'-tetrahydroxychalcone + 3 CO2 + 4 CoA. It participates in secondary metabolite biosynthesis; flavonoid biosynthesis. Functionally, the primary product of this enzyme is 4,2',4',6'-tetrahydroxychalcone (also termed naringenin-chalcone or chalcone) which can under specific conditions spontaneously isomerize into naringenin. The polypeptide is Chalcone synthase 1 (CHS1) (Pisum sativum (Garden pea)).